The sequence spans 44 residues: Photosystem II reaction center protein K (44 aa).

Positions 1-7 (MTTLLLA) are excised as a propeptide. Residues 19 to 39 (IVDVLPVIPLLFLLLAFVWQA) form a helical membrane-spanning segment.

It belongs to the PsbK family. As to quaternary structure, PSII is composed of 1 copy each of membrane proteins PsbA, PsbB, PsbC, PsbD, PsbE, PsbF, PsbH, PsbI, PsbJ, PsbK, PsbL, PsbM, PsbT, PsbX, PsbY, PsbZ, Psb30/Ycf12, at least 3 peripheral proteins of the oxygen-evolving complex and a large number of cofactors. It forms dimeric complexes.

The protein localises to the plastid. The protein resides in the chloroplast thylakoid membrane. Functionally, one of the components of the core complex of photosystem II (PSII). PSII is a light-driven water:plastoquinone oxidoreductase that uses light energy to abstract electrons from H(2)O, generating O(2) and a proton gradient subsequently used for ATP formation. It consists of a core antenna complex that captures photons, and an electron transfer chain that converts photonic excitation into a charge separation. This chain is Photosystem II reaction center protein K, found in Tupiella akineta (Green alga).